The following is a 450-amino-acid chain: Tubulin alpha chain (450 aa).

GTP is bound at residue Gln11. Lys40 bears the N6-acetyllysine mark. 7 residues coordinate GTP: Glu71, Ser140, Gly144, Thr145, Thr179, Asn206, and Asn228. Glu71 is a Mg(2+) binding site. The active site involves Glu254.

This sequence belongs to the tubulin family. In terms of assembly, dimer of alpha and beta chains. A typical microtubule is a hollow water-filled tube with an outer diameter of 25 nm and an inner diameter of 15 nM. Alpha-beta heterodimers associate head-to-tail to form protofilaments running lengthwise along the microtubule wall with the beta-tubulin subunit facing the microtubule plus end conferring a structural polarity. Microtubules usually have 13 protofilaments but different protofilament numbers can be found in some organisms and specialized cells. It depends on Mg(2+) as a cofactor. Post-translationally, acetylation of alpha chains at Lys-40 stabilizes microtubules and affects affinity and processivity of microtubule motors. This modification has a role in multiple cellular functions, ranging from cell motility, cell cycle progression or cell differentiation to intracellular trafficking and signaling.

The protein localises to the cytoplasm. It is found in the cytoskeleton. The enzyme catalyses GTP + H2O = GDP + phosphate + H(+). In terms of biological role, tubulin is the major constituent of microtubules, a cylinder consisting of laterally associated linear protofilaments composed of alpha- and beta-tubulin heterodimers. Microtubules grow by the addition of GTP-tubulin dimers to the microtubule end, where a stabilizing cap forms. Below the cap, tubulin dimers are in GDP-bound state, owing to GTPase activity of alpha-tubulin. This Euplotes vannus (Marine ciliate) protein is Tubulin alpha chain.